Reading from the N-terminus, the 55-residue chain is Spermatid nuclear transition protein 1 (55 aa).

Over residues Met1–Lys42 the composition is skewed to basic residues. Positions Met1–Leu55 are disordered. Phosphoserine is present on residues Ser9, Ser36, Ser37, and Ser40.

Belongs to the nuclear transition protein 1 family. As to expression, testis.

It is found in the nucleus. Its subcellular location is the chromosome. Functionally, plays a key role in the replacement of histones to protamine in the elongating spermatids of mammals. In condensing spermatids, loaded onto the nucleosomes, where it promotes the recruitment and processing of protamines, which are responsible for histone eviction. In Ovis aries (Sheep), this protein is Spermatid nuclear transition protein 1 (TNP1).